Reading from the N-terminus, the 436-residue chain is Hydrolyase ccsE (436 aa).

Serine 249 acts as the Nucleophile in catalysis.

Belongs to the AB hydrolase superfamily. FUS2 hydrolase family. Homodimer.

It functions in the pathway mycotoxin biosynthesis. Its function is as follows. Hydrolyase; part of the gene cluster that mediates the biosynthesis of a family of the mycotoxins cytochalasins E and K. The hybrid PKS-NRPS synthetase ccsA and the enoyl reductase ccsC are responsible for fusion of phenylalanine with an octaketide backbone and subsequent release of the stable tetramic acid precursor. The polyketide synthase module (PKS) of the PKS-NRPS ccsA is responsible for the synthesis of the octaketide backbone. The downstream nonribosomal peptide synthetase (NRPS) amidates the carboxyl end of the octaketide with a phenylalanine. A reductase-like domain (R) at the C-terminus catalyzes the reductive release of the polyketide-amino acid intermediate. Because ccsA lacks a designated enoylreductase (ER) domain, the required activity is provided the enoyl reductase ccsC. Upon formation of the 11-membered carbocycle-fused perhydroisoindolone intermediate, a number of oxidative steps are required to afford the final cytochalasin E and K, including two hydroxylations at C17 and C18, one alcohol oxidation at C17, one epoxidation at C6 and C7 and two Baeyer-Villiger oxidations. The oxidative modification at C17, C18 and the C6-C7 epoxidation are likely to be catalyzed by the two cytochrome P450 oxygenases ccsD and ccsG. CcsD may be responsible for the epoxidation of the C6-C7 double bond. CcsG may be responsible for the successive oxidative modifications at C17 and C18. The double Baeyer-Villiger oxidations of ketocytochalasin to precytochalasin and cytochalasin Z(16) are among the final steps leading to cytochalasin E and K and are catalyzed by ccsB. The first oxygen insertion step follows that of the classic BVMO mechanism, generating the ester precytochalasin. Release of precytochalasin into an aqueous environment can generate the shunt product iso-precytochalasin through spontaneous isomerization. Alternatively, precytochalasin can undergo further oxidation by ccsB to yield the in-line carbonate-containing cytochalasin Z(16). Cytochalasin Z(16) is a precursor to cytochalasin E and cytochalasin K, whereas iso-precytochalasin is a precursor to cytochalasin Z(17) and rosellichalasin. The hydrolyase ccsE may catalyze hydrolysis of epoxide bond in cytochalasin E to afford cytochalasin K. The function of ccsF has not been assigned but it may play a role in post-PKS-NRPS biosynthetic step, resistance or transport of cytochalasins and related PKS-NRPS products. This chain is Hydrolyase ccsE, found in Aspergillus clavatus (strain ATCC 1007 / CBS 513.65 / DSM 816 / NCTC 3887 / NRRL 1 / QM 1276 / 107).